The following is a 248-amino-acid chain: 2,3-bisphosphoglycerate-dependent phosphoglycerate mutase (248 aa).

Substrate contacts are provided by residues 8-15 (RHGESVWN), 21-22 (TG), arginine 60, 87-90 (ERHY), lysine 98, 114-115 (RR), and 183-184 (GN). Histidine 9 acts as the Tele-phosphohistidine intermediate in catalysis. Glutamate 87 serves as the catalytic Proton donor/acceptor.

It belongs to the phosphoglycerate mutase family. BPG-dependent PGAM subfamily.

It catalyses the reaction (2R)-2-phosphoglycerate = (2R)-3-phosphoglycerate. It participates in carbohydrate degradation; glycolysis; pyruvate from D-glyceraldehyde 3-phosphate: step 3/5. In terms of biological role, catalyzes the interconversion of 2-phosphoglycerate and 3-phosphoglycerate. This chain is 2,3-bisphosphoglycerate-dependent phosphoglycerate mutase, found in Brachyspira hyodysenteriae (strain ATCC 49526 / WA1).